A 347-amino-acid polypeptide reads, in one-letter code: sn-1 oleoyl-lipid 12-desaturase (347 aa).

A run of 2 helical transmembrane segments spans residues 41 to 63 (AWSRVLLSVAAVVGCYALLAIAP) and 67 to 85 (LLPVWFLTGTTLTGFFVIG). The Histidine box-1 signature appears at 86 to 90 (HDCGH). A helical membrane pass occupies residues 98–118 (WVNNLVGHLAFLPLIYPFHSW). The Histidine box-2 signature appears at 122–126 (HNHHH). The next 3 membrane-spanning stretches (helical) occupy residues 164–184 (LWWLASVIHQLKLHFNWFAFE), 196–216 (LFVIIAGAIAFPVMFYTLGVW), and 218–238 (VVKFWLMPWLGYHFWMSTFTL). The short motif at 286–290 (HHLST) is the Histidine box-3 element.

Belongs to the fatty acid desaturase type 2 family. Requires Fe(2+) as cofactor.

It is found in the membrane. The catalysed reaction is a 1-[(9Z)-octadecenoyl]-2-acyl-glycerolipid + 2 reduced [2Fe-2S]-[ferredoxin] + O2 + 2 H(+) = a 1-[(9Z,12Z)-octadecdienoyl]-2-acyl-glycerolipid + 2 oxidized [2Fe-2S]-[ferredoxin] + 2 H2O. It participates in lipid metabolism; polyunsaturated fatty acid biosynthesis. Functionally, desaturase involved in fatty acid biosynthesis. Introduces a double bond at carbon 12 of oleoyl groups (18:1) attached to the sn-1 position of the glycerol moiety of membrane glycerolipids. Can also efficiently catalyze the desaturation of palmitoleic acid (16:1) in vitro. The polypeptide is sn-1 oleoyl-lipid 12-desaturase (Picosynechococcus sp. (strain ATCC 27264 / PCC 7002 / PR-6) (Agmenellum quadruplicatum)).